Consider the following 195-residue polypeptide: Probable GTP-binding protein EngB (195 aa).

Residues 22–195 (GRPEVALAGR…WAALLPFVAS (174 aa)) enclose the EngB-type G domain. Residues 30–37 (GRSNVGKS), 57–61 (GKTQT), 75–78 (DVPG), 142–145 (TKAD), and 174–176 (FSA) each bind GTP. 2 residues coordinate Mg(2+): serine 37 and threonine 59.

The protein belongs to the TRAFAC class TrmE-Era-EngA-EngB-Septin-like GTPase superfamily. EngB GTPase family. The cofactor is Mg(2+).

Necessary for normal cell division and for the maintenance of normal septation. The protein is Probable GTP-binding protein EngB of Geobacillus kaustophilus (strain HTA426).